We begin with the raw amino-acid sequence, 187 residues long: NADH-quinone oxidoreductase subunit B (187 aa).

[4Fe-4S] cluster contacts are provided by C46, C47, C112, and C141.

The protein belongs to the complex I 20 kDa subunit family. NDH-1 is composed of 14 different subunits. Subunits NuoB, C, D, E, F, and G constitute the peripheral sector of the complex. It depends on [4Fe-4S] cluster as a cofactor.

Its subcellular location is the cell inner membrane. It carries out the reaction a quinone + NADH + 5 H(+)(in) = a quinol + NAD(+) + 4 H(+)(out). NDH-1 shuttles electrons from NADH, via FMN and iron-sulfur (Fe-S) centers, to quinones in the respiratory chain. The immediate electron acceptor for the enzyme in this species is believed to be ubiquinone. Couples the redox reaction to proton translocation (for every two electrons transferred, four hydrogen ions are translocated across the cytoplasmic membrane), and thus conserves the redox energy in a proton gradient. The protein is NADH-quinone oxidoreductase subunit B of Myxococcus xanthus (strain DK1622).